We begin with the raw amino-acid sequence, 270 residues long: MISKINFVKMHGLGNDFVIVNKRDLSSSYDLSQLAKNMAERHTGIGCDQFIIYEEHNDFYEMIIYNIDGSSAKLCGNATRCLAKLIYLDTGKQDITVMVGNKKLLCNVNDENNISVNVGSVSFNEAWMPSRDKVWEFAERYMIDLKETICVDIGNPHVVIFSKLEPQDQKIVGERLQAKELFADGVNVNFAEVKDNKIYLSVWERGAGLTLACGSGACGSFAAGLKRGFIHSPSTIVFKHGNLTMKEENGNIIMQGAATLVARGEYYCEQ.

3 residues coordinate substrate: Asn-15, Gln-49, and Asn-66. Cys-75 functions as the Proton donor in the catalytic mechanism. Substrate is bound by residues 76 to 77 (GN), Asn-155, Asn-187, and 204 to 205 (ER). Residue Cys-213 is the Proton acceptor of the active site. 214 to 215 (GS) is a binding site for substrate.

This sequence belongs to the diaminopimelate epimerase family. Homodimer.

The protein localises to the cytoplasm. The catalysed reaction is (2S,6S)-2,6-diaminopimelate = meso-2,6-diaminopimelate. It participates in amino-acid biosynthesis; L-lysine biosynthesis via DAP pathway; DL-2,6-diaminopimelate from LL-2,6-diaminopimelate: step 1/1. Its function is as follows. Catalyzes the stereoinversion of LL-2,6-diaminopimelate (L,L-DAP) to meso-diaminopimelate (meso-DAP), a precursor of L-lysine and an essential component of the bacterial peptidoglycan. This chain is Diaminopimelate epimerase, found in Rickettsia conorii (strain ATCC VR-613 / Malish 7).